The sequence spans 831 residues: Valine--tRNA ligase (831 aa).

The 'HIGH' region signature appears at 77 to 87 (PFTSGELHMGH). Positions 564-568 (RMSKS) match the 'KMSKS' region motif. Position 567 (Lys567) interacts with ATP.

The protein belongs to the class-I aminoacyl-tRNA synthetase family. ValS type 2 subfamily.

It is found in the cytoplasm. The catalysed reaction is tRNA(Val) + L-valine + ATP = L-valyl-tRNA(Val) + AMP + diphosphate. Catalyzes the attachment of valine to tRNA(Val). As ValRS can inadvertently accommodate and process structurally similar amino acids such as threonine, to avoid such errors, it has a 'posttransfer' editing activity that hydrolyzes mischarged Thr-tRNA(Val) in a tRNA-dependent manner. In Sulfolobus acidocaldarius (strain ATCC 33909 / DSM 639 / JCM 8929 / NBRC 15157 / NCIMB 11770), this protein is Valine--tRNA ligase.